The chain runs to 236 residues: 2-C-methyl-D-erythritol 4-phosphate cytidylyltransferase (236 aa).

Belongs to the IspD/TarI cytidylyltransferase family. IspD subfamily. Homodimer.

It carries out the reaction 2-C-methyl-D-erythritol 4-phosphate + CTP + H(+) = 4-CDP-2-C-methyl-D-erythritol + diphosphate. It functions in the pathway isoprenoid biosynthesis; isopentenyl diphosphate biosynthesis via DXP pathway; isopentenyl diphosphate from 1-deoxy-D-xylulose 5-phosphate: step 2/6. Its function is as follows. Catalyzes the formation of 4-diphosphocytidyl-2-C-methyl-D-erythritol from CTP and 2-C-methyl-D-erythritol 4-phosphate (MEP). This Klebsiella pneumoniae subsp. pneumoniae (strain ATCC 700721 / MGH 78578) protein is 2-C-methyl-D-erythritol 4-phosphate cytidylyltransferase.